The chain runs to 161 residues: Allophycocyanin beta chain (161 aa).

An N4-methylasparagine modification is found at asparagine 71. Cysteine 81 is a binding site for (2R,3E)-phycocyanobilin.

It belongs to the phycobiliprotein family. In terms of assembly, heterodimer of an alpha and a beta chain. In terms of processing, contains one covalently linked phycocyanobilin chromophore.

It is found in the cellular thylakoid membrane. Light-harvesting photosynthetic bile pigment-protein from the phycobiliprotein complex. Allophycocyanin has a maximum absorption at approximately 650 nanometers. This Synechocystis sp. (strain ATCC 27184 / PCC 6803 / Kazusa) protein is Allophycocyanin beta chain (apcB).